A 465-amino-acid polypeptide reads, in one-letter code: Argininosuccinate lyase (465 aa).

It belongs to the lyase 1 family. Argininosuccinate lyase subfamily.

It is found in the cytoplasm. It catalyses the reaction 2-(N(omega)-L-arginino)succinate = fumarate + L-arginine. Its pathway is amino-acid biosynthesis; L-arginine biosynthesis; L-arginine from L-ornithine and carbamoyl phosphate: step 3/3. This is Argininosuccinate lyase from Bradyrhizobium diazoefficiens (strain JCM 10833 / BCRC 13528 / IAM 13628 / NBRC 14792 / USDA 110).